We begin with the raw amino-acid sequence, 127 residues long: MAIVGLGTDIVEIERIQAHVARAGNKLAKRVLTEAELAIYTAHSQPSRYLAKRFAAKEAAAKALGTGIGRGVSFQHIHIGNNEDGAPTIHFTEGALARLQQLKATVGHISIADEKSYAIVTVIIESQ.

D9 and E58 together coordinate Mg(2+).

This sequence belongs to the P-Pant transferase superfamily. AcpS family. Requires Mg(2+) as cofactor.

The protein resides in the cytoplasm. It carries out the reaction apo-[ACP] + CoA = holo-[ACP] + adenosine 3',5'-bisphosphate + H(+). In terms of biological role, transfers the 4'-phosphopantetheine moiety from coenzyme A to a Ser of acyl-carrier-protein. The polypeptide is Holo-[acyl-carrier-protein] synthase (Shewanella baltica (strain OS195)).